Here is a 103-residue protein sequence, read N- to C-terminus: Large ribosomal subunit protein bL21 (103 aa).

Belongs to the bacterial ribosomal protein bL21 family. As to quaternary structure, part of the 50S ribosomal subunit. Contacts protein L20.

Its function is as follows. This protein binds to 23S rRNA in the presence of protein L20. The chain is Large ribosomal subunit protein bL21 from Desulfotalea psychrophila (strain LSv54 / DSM 12343).